The primary structure comprises 293 residues: Ribosomal protein L11 methyltransferase (293 aa).

Residues Thr145, Gly166, Asp188, and Asn230 each coordinate S-adenosyl-L-methionine.

This sequence belongs to the methyltransferase superfamily. PrmA family.

The protein resides in the cytoplasm. It catalyses the reaction L-lysyl-[protein] + 3 S-adenosyl-L-methionine = N(6),N(6),N(6)-trimethyl-L-lysyl-[protein] + 3 S-adenosyl-L-homocysteine + 3 H(+). Methylates ribosomal protein L11. This is Ribosomal protein L11 methyltransferase from Citrobacter koseri (strain ATCC BAA-895 / CDC 4225-83 / SGSC4696).